The sequence spans 261 residues: 3-methyl-2-oxobutanoate hydroxymethyltransferase (261 aa).

The Mg(2+) site is built by aspartate 44 and aspartate 83. 3-methyl-2-oxobutanoate is bound by residues aspartate 44 to serine 45, aspartate 83, and lysine 113. Glutamate 115 lines the Mg(2+) pocket. Residue glutamate 183 is the Proton acceptor of the active site.

Belongs to the PanB family. In terms of assembly, homodecamer; pentamer of dimers. It depends on Mg(2+) as a cofactor.

Its subcellular location is the cytoplasm. It catalyses the reaction 3-methyl-2-oxobutanoate + (6R)-5,10-methylene-5,6,7,8-tetrahydrofolate + H2O = 2-dehydropantoate + (6S)-5,6,7,8-tetrahydrofolate. Its pathway is cofactor biosynthesis; (R)-pantothenate biosynthesis; (R)-pantoate from 3-methyl-2-oxobutanoate: step 1/2. Its function is as follows. Catalyzes the reversible reaction in which hydroxymethyl group from 5,10-methylenetetrahydrofolate is transferred onto alpha-ketoisovalerate to form ketopantoate. The chain is 3-methyl-2-oxobutanoate hydroxymethyltransferase from Cyanothece sp. (strain PCC 7425 / ATCC 29141).